Consider the following 392-residue polypeptide: DNA primase small subunit PriS (392 aa).

Residues Asp98, Asp100, and Asp295 contribute to the active site.

It belongs to the eukaryotic-type primase small subunit family. As to quaternary structure, heterodimer of a small subunit (PriS) and a large subunit (PriL). Mg(2+) is required as a cofactor. The cofactor is Mn(2+).

Functionally, catalytic subunit of DNA primase, an RNA polymerase that catalyzes the synthesis of short RNA molecules used as primers for DNA polymerase during DNA replication. The small subunit contains the primase catalytic core and has DNA synthesis activity on its own. Binding to the large subunit stabilizes and modulates the activity, increasing the rate of DNA synthesis while decreasing the length of the DNA fragments, and conferring RNA synthesis capability. The DNA polymerase activity may enable DNA primase to also catalyze primer extension after primer synthesis. May also play a role in DNA repair. The polypeptide is DNA primase small subunit PriS (Haloarcula marismortui (strain ATCC 43049 / DSM 3752 / JCM 8966 / VKM B-1809) (Halobacterium marismortui)).